A 489-amino-acid polypeptide reads, in one-letter code: 3-octaprenyl-4-hydroxybenzoate carboxy-lyase (489 aa).

Residue asparagine 172 participates in Mn(2+) binding. Prenylated FMN contacts are provided by residues 175–177 (IYR), 189–191 (RWL), and 194–195 (RG). Mn(2+) is bound at residue glutamate 238. The active-site Proton donor is aspartate 287.

This sequence belongs to the UbiD family. In terms of assembly, homohexamer. Prenylated FMN serves as cofactor. It depends on Mn(2+) as a cofactor.

The protein resides in the cell membrane. It carries out the reaction a 4-hydroxy-3-(all-trans-polyprenyl)benzoate + H(+) = a 2-(all-trans-polyprenyl)phenol + CO2. The protein operates within cofactor biosynthesis; ubiquinone biosynthesis. Catalyzes the decarboxylation of 3-octaprenyl-4-hydroxy benzoate to 2-octaprenylphenol, an intermediate step in ubiquinone biosynthesis. This chain is 3-octaprenyl-4-hydroxybenzoate carboxy-lyase, found in Klebsiella pneumoniae (strain 342).